Reading from the N-terminus, the 132-residue chain is Acid shock protein (132 aa).

The signal sequence occupies residues 1 to 21 (MKKVLALVVAAAMGLSSAAFA). Low complexity predominate over residues 20 to 45 (FAAETTTSSAAPATATATTTKAAPAK). The segment at 20-132 (FAAETTTSSA…AAKPAAQPAA (113 aa)) is disordered. A propeptide spanning residues 22-90 (AETTTSSAAP…TTAPVEQKAQ (69 aa)) is cleaved from the precursor. Positions 62-71 (AAKKHHKKAV) are enriched in basic residues. Composition is skewed to low complexity over residues 76–90 (AAPATTTAPVEQKAQ) and 100–109 (AKPAVAQKAQ). Basic residues predominate over residues 110–119 (AAKKHHKKAV).

This sequence belongs to the Asr family. In terms of processing, proteolytic processing gives rise to the active protein.

The protein resides in the periplasm. Its function is as follows. Required for growth and/or survival at acidic conditions. The protein is Acid shock protein of Enterobacter sp. (strain 638).